The chain runs to 1088 residues: Exportin-T (1088 aa).

Residues 435 to 503 (KNNNNKNKNT…VKNANNIKNN (69 aa)) show a composition bias toward low complexity. Disordered stretches follow at residues 435–513 (KNNN…DDDD) and 1059–1088 (LNNN…KNGH).

Belongs to the exportin family.

The protein resides in the nucleus. Its subcellular location is the cytoplasm. Its function is as follows. Mediates the nuclear export of aminoacylated tRNAs. This chain is Exportin-T (xpot), found in Dictyostelium discoideum (Social amoeba).